The following is a 620-amino-acid chain: Protein regulator of cytokinesis 1 (620 aa).

Positions 1–303 are required for the interaction with KIF4A; it reads MRRSEVLAEE…IEAIRVELVQ (303 aa). The dimerization stretch occupies residues 1–341; that stretch reads MRRSEVLAEE…QLHDAEIVRL (341 aa). Coiled-coil stretches lie at residues 96–133, 211–304, and 383–463; these read ILQL…ELCE, SLEN…LVQY, and GNLL…TEML. The segment at 342–466 is spectrin-fold; it reads KNYYEVHKEL…QTETEMLYGS (125 aa). Positions 446–459 are enriched in basic and acidic residues; that stretch reads AKQERQLKNKKQTE. Residues 446-488 are disordered; the sequence is AKQERQLKNKKQTETEMLYGSAPRTPSKRRGLAPNTPGKARKL. The interval 467–620 is unstructured, Arg/Lys rich; that stretch reads APRTPSKRRG…GILNSTNIQS (154 aa). Phosphothreonine; by CDK1 is present on residues T470 and T481. Phosphoserine is present on residues S513, R541, and S571. Residues 517–545 are disordered; sequence RLPPSGSKPVAASTCSGKKTPRTGRHGAN. T578 bears the Phosphothreonine mark. Positions 600–620 are disordered; sequence LSKASKSDATSGILNSTNIQS. A compositionally biased stretch (polar residues) spans 606–620; sequence SDATSGILNSTNIQS. T616 is modified (phosphothreonine; by PLK1).

It belongs to the MAP65/ASE1 family. As to quaternary structure, homodimer. Interacts with the C-terminal Rho-GAP domain and the basic region of RACGAP1. The interaction with RACGAP1 inhibits its GAP activity towards CDC42 in vitro, which may be required for maintaining normal spindle morphology. Interacts (via N-terminus) with the C-terminus of CENPE (via C-terminus); the interaction occurs during late mitosis. Interacts (via N-terminus) with KIF4A (via C-terminus); the interaction is required for the progression of mitosis. Interacts (via N-terminus) with KIF23 (via C-terminus); the interaction occurs during late mitosis. Interacts with KIF14 and KIF20A. Interacts with PLK1. Interacts with KIF20B. Interacts with CCDC66. In terms of processing, phosphorylation by CDK1 in early mitosis holds PRC1 in an inactive monomeric state, during the metaphase to anaphase transition, PRC1 is dephosphorylated, promoting interaction with KIF4A, which then translocates PRC1 along mitotic spindles to the plus ends of antiparallel interdigitating microtubules. Dephosphorylation also promotes MT-bundling activity by allowing dimerization. Phosphorylation by CDK1 prevents PLK1-binding: upon degradation of CDK1 at anaphase and dephosphorylation, it is then phosphorylated by PLK1, leading to cytokinesis. Overexpressed in bladder cancer cells.

It is found in the nucleus. The protein localises to the cytoplasm. The protein resides in the cytoskeleton. It localises to the spindle pole. Its subcellular location is the midbody. It is found in the chromosome. Its function is as follows. Key regulator of cytokinesis that cross-links antiparrallel microtubules at an average distance of 35 nM. Essential for controlling the spatiotemporal formation of the midzone and successful cytokinesis. Required for KIF14 localization to the central spindle and midbody. Required to recruit PLK1 to the spindle. Stimulates PLK1 phosphorylation of RACGAP1 to allow recruitment of ECT2 to the central spindle. Acts as an oncogene for promoting bladder cancer cells proliferation, apoptosis inhibition and carcinogenic progression. The chain is Protein regulator of cytokinesis 1 from Homo sapiens (Human).